Reading from the N-terminus, the 211-residue chain is Uracil phosphoribosyltransferase (211 aa).

Residues Arg-78, Arg-103, and 130 to 138 (DPMLATGGT) contribute to the 5-phospho-alpha-D-ribose 1-diphosphate site. Residues Ile-195 and 200–202 (GDA) each bind uracil. Position 201 (Asp-201) interacts with 5-phospho-alpha-D-ribose 1-diphosphate.

The protein belongs to the UPRTase family. The cofactor is Mg(2+).

It carries out the reaction UMP + diphosphate = 5-phospho-alpha-D-ribose 1-diphosphate + uracil. It participates in pyrimidine metabolism; UMP biosynthesis via salvage pathway; UMP from uracil: step 1/1. Allosterically activated by GTP. Functionally, catalyzes the conversion of uracil and 5-phospho-alpha-D-ribose 1-diphosphate (PRPP) to UMP and diphosphate. In Pseudarthrobacter chlorophenolicus (strain ATCC 700700 / DSM 12829 / CIP 107037 / JCM 12360 / KCTC 9906 / NCIMB 13794 / A6) (Arthrobacter chlorophenolicus), this protein is Uracil phosphoribosyltransferase.